The primary structure comprises 315 residues: Methionyl-tRNA formyltransferase (315 aa).

Position 113 to 116 (113 to 116) interacts with (6S)-5,6,7,8-tetrahydrofolate; it reads SILP.

Belongs to the Fmt family.

The catalysed reaction is L-methionyl-tRNA(fMet) + (6R)-10-formyltetrahydrofolate = N-formyl-L-methionyl-tRNA(fMet) + (6S)-5,6,7,8-tetrahydrofolate + H(+). Its function is as follows. Attaches a formyl group to the free amino group of methionyl-tRNA(fMet). The formyl group appears to play a dual role in the initiator identity of N-formylmethionyl-tRNA by promoting its recognition by IF2 and preventing the misappropriation of this tRNA by the elongation apparatus. The chain is Methionyl-tRNA formyltransferase from Vibrio cholerae serotype O1 (strain M66-2).